Reading from the N-terminus, the 120-residue chain is NAD(P)H-quinone oxidoreductase subunit 3, chloroplastic (120 aa).

The next 3 membrane-spanning stretches (helical) occupy residues 9-29, 64-84, and 88-108; these read IFWA…LISG, MFAL…PWAM, and VLGV…IVGS.

The protein belongs to the complex I subunit 3 family. NDH is composed of at least 16 different subunits, 5 of which are encoded in the nucleus.

It is found in the plastid. It localises to the chloroplast thylakoid membrane. The enzyme catalyses a plastoquinone + NADH + (n+1) H(+)(in) = a plastoquinol + NAD(+) + n H(+)(out). It carries out the reaction a plastoquinone + NADPH + (n+1) H(+)(in) = a plastoquinol + NADP(+) + n H(+)(out). NDH shuttles electrons from NAD(P)H:plastoquinone, via FMN and iron-sulfur (Fe-S) centers, to quinones in the photosynthetic chain and possibly in a chloroplast respiratory chain. The immediate electron acceptor for the enzyme in this species is believed to be plastoquinone. Couples the redox reaction to proton translocation, and thus conserves the redox energy in a proton gradient. In Illicium oligandrum (Star anise), this protein is NAD(P)H-quinone oxidoreductase subunit 3, chloroplastic.